Reading from the N-terminus, the 535-residue chain is MVLHLVPRWSASLFRASPRWKKTYSQRASAQLKWLGCPRSVYSPLACRAYSKVSGSPEVMLTPERYPVQRLPFSTVSEEDLAAFECIIPGRVITDPEQLQTCNVDWLRTVRGCSKVLLRPQTSEEVSQILRHCYKRNLAVNPQGGNTGMVGGSVPVFDEVILSTALMNQVISFHDVSGILVCQAGCVLEELSRYVQERDFIMPLDLGAKGSCHIGGNVATNAGGLRFLRYGSLRGTVLGLEVVLADGTILNCLTSLRKDNTGYDLKQMFIGSEGTLGVITAVSIVCPPRPKAVNVAFLGCPGFTEVLQTFRTCKGQLGEILSAFEFMDAECMQLVGQHLHLTNPVQESPFYVLVETSGSSAGHDAEKLTNVLEQVLNSGLVIDGTMATDQRKVQMLWALRERITEALSRDGYVFKYDLSLPVERLYDLVIDLRTRLGPRAKHVVGYGHLGDGNLHLNVTAEAFSQELLGALEPYVYAWTAEQRGSVSAEHGLGFKKKNVLGYSKPPVAVKLMQQLKAMLDPKGILNPYKTLPARA.

The transit peptide at 1-50 (MVLHLVPRWSASLFRASPRWKKTYSQRASAQLKWLGCPRSVYSPLACRAY) directs the protein to the mitochondrion. Residues 110-289 (VRGCSKVLLR…TAVSIVCPPR (180 aa)) form the FAD-binding PCMH-type domain. Lysine 115 is modified (N6-succinyllysine). Residues arginine 400, threonine 404, and lysine 415 each contribute to the (R)-2-hydroxyglutarate site. Residue arginine 400 participates in (R)-lactate binding. Arginine 400, threonine 404, and lysine 415 together coordinate (R)-malate. Zn(2+)-binding residues include histidine 448 and histidine 455. (R)-2-hydroxyglutarate is bound at residue asparagine 457. Glutamate 489 serves as a coordination point for Zn(2+). Histidine 490 provides a ligand contact to (R)-2-hydroxyglutarate. A (R)-lactate-binding site is contributed by histidine 490. Histidine 490 lines the (R)-malate pocket.

The protein belongs to the FAD-binding oxidoreductase/transferase type 4 family. FAD serves as cofactor.

Its subcellular location is the mitochondrion. It carries out the reaction (R)-2-hydroxyglutarate + A = 2-oxoglutarate + AH2. The catalysed reaction is (R)-malate + A = oxaloacetate + AH2. Activated by zinc, cobalt and manganese ions. Inhibited by EDTA. In terms of biological role, catalyzes the oxidation of D-2-hydroxyglutarate (D-2-HG) to alpha-ketoglutarate. Also catalyzes the oxidation of other D-2-hydroxyacids, such as D-malate (D-MAL) and D-lactate (D-LAC). Exhibits high activities towards D-2-HG and D-MAL but a very weak activity towards D-LAC. The chain is D-2-hydroxyglutarate dehydrogenase, mitochondrial from Rattus norvegicus (Rat).